Consider the following 373-residue polypeptide: Chorismate synthase (373 aa).

R46 lines the NADP(+) pocket. Residues 123-125 (RSS), 251-252 (NA), G295, 310-314 (KPTPS), and R337 each bind FMN.

This sequence belongs to the chorismate synthase family. FMNH2 is required as a cofactor.

It carries out the reaction 5-O-(1-carboxyvinyl)-3-phosphoshikimate = chorismate + phosphate. It participates in metabolic intermediate biosynthesis; chorismate biosynthesis; chorismate from D-erythrose 4-phosphate and phosphoenolpyruvate: step 7/7. Catalyzes the anti-1,4-elimination of the C-3 phosphate and the C-6 proR hydrogen from 5-enolpyruvylshikimate-3-phosphate (EPSP) to yield chorismate, which is the branch point compound that serves as the starting substrate for the three terminal pathways of aromatic amino acid biosynthesis. This reaction introduces a second double bond into the aromatic ring system. The polypeptide is Chorismate synthase (Methanococcus maripaludis (strain DSM 14266 / JCM 13030 / NBRC 101832 / S2 / LL)).